The sequence spans 165 residues: Large ribosomal subunit protein uL11 (165 aa).

This sequence belongs to the universal ribosomal protein uL11 family.

Functionally, binds directly to 26S ribosomal RNA. The chain is Large ribosomal subunit protein uL11 (rpl-12) from Caenorhabditis briggsae.